A 158-amino-acid chain; its full sequence is Regulator of G-protein signaling 13 (158 aa).

The RGS domain maps to 34–150; sequence SLESLMATKY…LKSEMYQQLL (117 aa).

Inhibits signal transduction by increasing the GTPase activity of G protein alpha subunits thereby driving them into their inactive GDP-bound form. Binds to both G(i)-alpha and G(q)-alpha. The sequence is that of Regulator of G-protein signaling 13 (Rgs13) from Mus musculus (Mouse).